The primary structure comprises 328 residues: 3-ketodihydrosphingosine reductase TSC10 (328 aa).

Leu-16 contributes to the NADP(+) binding site. Positions 19, 21, and 23 each coordinate NADPH. Residues 19-23 carry the GXSXG motif; sequence GASQG. Residue Leu-24 coordinates NADP(+). Residues Arg-44, Lys-48, and Asp-73 each coordinate NADPH. An NADP(+)-binding site is contributed by Asp-73. Ser-161 functions as the Proton donor in the catalytic mechanism. NADP(+) is bound by residues Tyr-175, Lys-179, and Ser-210. The active-site Proton acceptor is the Tyr-175. Lys-179 functions as the Lowers pKa of active site Tyr in the catalytic mechanism. The chain crosses the membrane as a helical span at residues 277 to 297; that stretch reads FFQVIVSFIFSIIAPIANYVV.

The protein belongs to the short-chain dehydrogenases/reductases (SDR) family.

Its subcellular location is the endoplasmic reticulum membrane. The catalysed reaction is sphinganine + NADP(+) = 3-oxosphinganine + NADPH + H(+). The protein operates within lipid metabolism; sphingolipid metabolism. Functionally, catalyzes the reduction of 3'-oxosphinganine (3-ketodihydrosphingosine/KDS) to sphinganine (dihydrosphingosine/DHS), the second step of de novo sphingolipid biosynthesis. In Debaryomyces hansenii (strain ATCC 36239 / CBS 767 / BCRC 21394 / JCM 1990 / NBRC 0083 / IGC 2968) (Yeast), this protein is 3-ketodihydrosphingosine reductase TSC10 (TSC10).